The chain runs to 391 residues: Acetylgalactosaminyl-O-glycosyl-glycoprotein beta-1,3-N-acetylglucosaminyltransferase (391 aa).

Residues M1–S11 lie on the Cytoplasmic side of the membrane. A helical; Signal-anchor for type II membrane protein transmembrane segment spans residues P12–L32. Over Q33 to H391 the chain is Lumenal. N68 and N191 each carry an N-linked (GlcNAc...) asparagine glycan.

The protein belongs to the glycosyltransferase 31 family.

It localises to the golgi apparatus membrane. It catalyses the reaction a 3-O-[N-acetyl-alpha-D-galactosaminyl]-L-threonyl-[protein] + UDP-N-acetyl-alpha-D-glucosamine = a 3-O-[N-acetyl-beta-D-glucosaminyl-(1-&gt;3)-N-acetyl-alpha-D-galactosaminyl]-L-threonyl-[protein] + UDP + H(+). It carries out the reaction a 3-O-[N-acetyl-alpha-D-galactosaminyl]-L-seryl-[protein] + UDP-N-acetyl-alpha-D-glucosamine = 3-O-[N-acetyl-beta-D-glucosaminyl-(1-&gt;3)-N-acetyl-alpha-D-galactosaminyl]-L-seryl-[protein] + UDP + H(+). It functions in the pathway protein modification; protein glycosylation. In terms of biological role, beta-1,3-N-acetylglucosaminyltransferase that synthesizes the core 3 structure of the O-glycan, an important precursor in the biosynthesis of mucin-type glycoproteins. Plays an important role in the synthesis of mucin-type O-glycans in digestive organs. The polypeptide is Acetylgalactosaminyl-O-glycosyl-glycoprotein beta-1,3-N-acetylglucosaminyltransferase (B3gnt6) (Mus musculus (Mouse)).